Here is a 450-residue protein sequence, read N- to C-terminus: Glucose-6-phosphate isomerase (450 aa).

Position 39 is a phosphothreonine (threonine 39). The active-site Proton donor is the glutamate 291. Active-site residues include histidine 312 and lysine 426.

The protein belongs to the GPI family.

Its subcellular location is the cytoplasm. The catalysed reaction is alpha-D-glucose 6-phosphate = beta-D-fructose 6-phosphate. It functions in the pathway carbohydrate biosynthesis; gluconeogenesis. The protein operates within carbohydrate degradation; glycolysis; D-glyceraldehyde 3-phosphate and glycerone phosphate from D-glucose: step 2/4. In terms of biological role, catalyzes the reversible isomerization of glucose-6-phosphate to fructose-6-phosphate. The protein is Glucose-6-phosphate isomerase of Bacillus thuringiensis (strain Al Hakam).